The primary structure comprises 427 residues: 11-beta-hydroxysteroid dehydrogenase type 2 (427 aa).

82 to 111 is a binding site for NAD(+); it reads TRAVLITGCDSGFGNATAKKLDAMGFTVLA. Residue S219 participates in substrate binding. Catalysis depends on Y232, which acts as the Proton acceptor.

It belongs to the short-chain dehydrogenases/reductases (SDR) family. In terms of assembly, interacts with ligand-free cytoplasmic NR3C2. In terms of tissue distribution, highly expressed in the kidney and adrenal and at lower levels in the colon.

Its subcellular location is the microsome. The protein resides in the endoplasmic reticulum. It catalyses the reaction an 11beta-hydroxysteroid + NAD(+) = an 11-oxosteroid + NADH + H(+). The enzyme catalyses corticosterone + NAD(+) = 11-dehydrocorticosterone + NADH + H(+). It carries out the reaction cortisol + NAD(+) = cortisone + NADH + H(+). The catalysed reaction is 11beta,17beta-dihydroxyandrost-4-ene-3-one + NAD(+) = 17beta-hydroxyandrost-4-ene-3,11-dione + NADH + H(+). It catalyses the reaction 11beta-hydroxyandrost-4-ene-3,17-dione + NAD(+) = androst-4-ene-3,11,17-trione + NADH + H(+). It functions in the pathway steroid metabolism. Inhibited by glycyrrhetinic acid, carbenoloxone, 11-alpha-OH-progesterone and 11-beta-OH-progesterone. Functionally, catalyzes the conversion of biologically active 11beta-hydroxyglucocorticoids (11beta-hydroxysteroid) such as cortisol, to inactive 11-ketoglucocorticoids (11-oxosteroid) such as cortisone, in the presence of NAD(+). Functions as a dehydrogenase (oxidase), thereby decreasing the concentration of active glucocorticoids, thus protecting the nonselective mineralocorticoid receptor from occupation by glucocorticoids. Plays an important role in maintaining glucocorticoids balance during preimplantation and protects the fetus from excessive maternal corticosterone exposure. Catalyzes the oxidation of 11beta-hydroxytestosterone (11beta,17beta-dihydroxyandrost-4-ene-3-one) to 11-ketotestosterone (17beta-hydroxyandrost-4-ene-3,11-dione), a major bioactive androgen. Catalyzes the conversion of 11beta-hydroxyandrostenedione (11beta-hydroxyandrost-4-ene-3,17-dione) to 11-ketoandrostenedione (androst-4-ene-3,11,17-trione), which can be further metabolized to 11-ketotestosterone. Converts 7-beta-25-dihydroxycholesterol to 7-oxo-25-hydroxycholesterol in vitro. 7-beta-25-dihydroxycholesterol (not 7-oxo-25-hydroxycholesterol) acts as a ligand for the G-protein-coupled receptor (GPCR) Epstein-Barr virus-induced gene 2 (EBI2) and may thereby regulate immune cell migration. May protect ovulating oocytes and fertilizing spermatozoa from the adverse effects of cortisol. In Ovis aries (Sheep), this protein is 11-beta-hydroxysteroid dehydrogenase type 2 (HSD11B2).